An 804-amino-acid polypeptide reads, in one-letter code: Phenylalanine--tRNA ligase beta subunit (804 aa).

Residues 38–148 enclose the tRNA-binding domain; that stretch reads RAAFRAFTIA…ENAPVGTSFA (111 aa). Residues 401 to 476 enclose the B5 domain; that stretch reads HTARVIDFPV…RIHGINRIDP (76 aa). The Mg(2+) site is built by Asp-454, Asp-460, Glu-463, and Glu-464. Residues 710–803 enclose the FDX-ACB domain; the sequence is SLFQSLKRDY…VAKQTGGVLR (94 aa).

This sequence belongs to the phenylalanyl-tRNA synthetase beta subunit family. Type 1 subfamily. In terms of assembly, tetramer of two alpha and two beta subunits. The cofactor is Mg(2+).

The protein localises to the cytoplasm. The enzyme catalyses tRNA(Phe) + L-phenylalanine + ATP = L-phenylalanyl-tRNA(Phe) + AMP + diphosphate + H(+). The polypeptide is Phenylalanine--tRNA ligase beta subunit (Brucella suis biovar 1 (strain 1330)).